A 765-amino-acid chain; its full sequence is FHF complex subunit HOOK interacting protein 2A (765 aa).

Disordered regions lie at residues 193-236 (TLKG…DHLS) and 532-561 (TDIS…KNDG). Polar residues-rich tracts occupy residues 196–208 (GQDS…GQSR) and 535–550 (SPEN…SSSP).

Belongs to the FHIP family. Expressed in all tissues tested, highly expressed brain. As to expression, only detected at high levels in testis.

Functionally, required for proper functioning of the nervous system. The chain is FHF complex subunit HOOK interacting protein 2A from Homo sapiens (Human).